A 337-amino-acid polypeptide reads, in one-letter code: Aspartate carbamoyltransferase catalytic subunit (337 aa).

Residues Arg-59 and Thr-60 each coordinate carbamoyl phosphate. Lys-87 provides a ligand contact to L-aspartate. Carbamoyl phosphate is bound by residues Arg-109, His-142, and Gln-145. L-aspartate-binding residues include Arg-182 and Arg-253. 2 residues coordinate carbamoyl phosphate: Gly-294 and Pro-295.

This sequence belongs to the aspartate/ornithine carbamoyltransferase superfamily. ATCase family. In terms of assembly, heterododecamer (2C3:3R2) of six catalytic PyrB chains organized as two trimers (C3), and six regulatory PyrI chains organized as three dimers (R2).

It carries out the reaction carbamoyl phosphate + L-aspartate = N-carbamoyl-L-aspartate + phosphate + H(+). It participates in pyrimidine metabolism; UMP biosynthesis via de novo pathway; (S)-dihydroorotate from bicarbonate: step 2/3. Functionally, catalyzes the condensation of carbamoyl phosphate and aspartate to form carbamoyl aspartate and inorganic phosphate, the committed step in the de novo pyrimidine nucleotide biosynthesis pathway. The protein is Aspartate carbamoyltransferase catalytic subunit of Prochlorococcus marinus (strain MIT 9211).